Consider the following 273-residue polypeptide: Dermonecrotic toxin LapSicTox-alphaIB1aii (273 aa).

H5 is an active-site residue. Residues E25 and D27 each contribute to the Mg(2+) site. Catalysis depends on H41, which acts as the Nucleophile. Disulfide bonds link C45–C51 and C47–C190. D85 contacts Mg(2+). N-linked (GlcNAc...) asparagine glycosylation occurs at N250.

Belongs to the arthropod phospholipase D family. Class II subfamily. The cofactor is Mg(2+). As to expression, expressed by the venom gland.

It is found in the secreted. It catalyses the reaction an N-(acyl)-sphingosylphosphocholine = an N-(acyl)-sphingosyl-1,3-cyclic phosphate + choline. The enzyme catalyses an N-(acyl)-sphingosylphosphoethanolamine = an N-(acyl)-sphingosyl-1,3-cyclic phosphate + ethanolamine. The catalysed reaction is a 1-acyl-sn-glycero-3-phosphocholine = a 1-acyl-sn-glycero-2,3-cyclic phosphate + choline. It carries out the reaction a 1-acyl-sn-glycero-3-phosphoethanolamine = a 1-acyl-sn-glycero-2,3-cyclic phosphate + ethanolamine. In terms of biological role, dermonecrotic toxins cleave the phosphodiester linkage between the phosphate and headgroup of certain phospholipids (sphingolipid and lysolipid substrates), forming an alcohol (often choline) and a cyclic phosphate. This toxin acts on sphingomyelin (SM). It may also act on ceramide phosphoethanolamine (CPE), lysophosphatidylcholine (LPC) and lysophosphatidylethanolamine (LPE), but not on lysophosphatidylserine (LPS), and lysophosphatidylglycerol (LPG). It acts by transphosphatidylation, releasing exclusively cyclic phosphate products as second products. Induces dermonecrosis, hemolysis, increased vascular permeability, edema, inflammatory response, and platelet aggregation. The protein is Dermonecrotic toxin LapSicTox-alphaIB1aii of Loxosceles apachea (Apache recluse spider).